The following is a 210-amino-acid chain: Protein VNG_2543C (210 aa).

The AMMECR1 domain occupies 12–206 (EDGARTVELA…ETGDEDDPVE (195 aa)).

The chain is Protein VNG_2543C from Halobacterium salinarum (strain ATCC 700922 / JCM 11081 / NRC-1) (Halobacterium halobium).